Reading from the N-terminus, the 64-residue chain is Large ribosomal subunit protein bL35 (64 aa).

Residues 1-14 are compositionally biased toward basic residues; it reads MKNKTHKGTAKRVK. The interval 1–29 is disordered; sequence MKNKTHKGTAKRVKVTGSGKLVREQANRR.

Belongs to the bacterial ribosomal protein bL35 family.

In Corynebacterium glutamicum (strain R), this protein is Large ribosomal subunit protein bL35.